Here is a 222-residue protein sequence, read N- to C-terminus: Glutathione S-transferase A4 (222 aa).

Met1 carries the N-acetylmethionine modification. Residues 3–83 (AKPKLYYFNG…YLAAKYNLYG (81 aa)) form the GST N-terminal domain. Glutathione is bound by residues Tyr9, 53–55 (GQV), and 66–68 (TQT). One can recognise a GST C-terminal domain in the interval 85–208 (DLKERVRIDM…QPGSQRKPPP (124 aa)).

The protein belongs to the GST superfamily. Alpha family. Homodimer. The N-terminus is blocked.

It is found in the cytoplasm. The catalysed reaction is RX + glutathione = an S-substituted glutathione + a halide anion + H(+). Functionally, conjugation of reduced glutathione to a wide number of exogenous and endogenous hydrophobic electrophiles. In Mus musculus (Mouse), this protein is Glutathione S-transferase A4 (Gsta4).